The chain runs to 249 residues: uncharacterized protein (249 aa).

The S4 RNA-binding domain maps to 7-64 (PRVHVFLAEKGVGSRRFCEELIRKKLVRVNNTIAKLGDKVTLGDRIIYKKQIFVFKDF). The Nucleophile role is filled by D112.

It belongs to the pseudouridine synthase RsuA family.

It carries out the reaction a uridine in RNA = a pseudouridine in RNA. This is an uncharacterized protein from Borreliella burgdorferi (strain ATCC 35210 / DSM 4680 / CIP 102532 / B31) (Borrelia burgdorferi).